We begin with the raw amino-acid sequence, 384 residues long: ATP phosphoribosyltransferase regulatory subunit (384 aa).

It belongs to the class-II aminoacyl-tRNA synthetase family. HisZ subfamily. In terms of assembly, heteromultimer composed of HisG and HisZ subunits.

It is found in the cytoplasm. Its pathway is amino-acid biosynthesis; L-histidine biosynthesis; L-histidine from 5-phospho-alpha-D-ribose 1-diphosphate: step 1/9. In terms of biological role, required for the first step of histidine biosynthesis. May allow the feedback regulation of ATP phosphoribosyltransferase activity by histidine. In Rhodospirillum rubrum (strain ATCC 11170 / ATH 1.1.1 / DSM 467 / LMG 4362 / NCIMB 8255 / S1), this protein is ATP phosphoribosyltransferase regulatory subunit.